A 495-amino-acid chain; its full sequence is 3-octaprenyl-4-hydroxybenzoate carboxy-lyase (495 aa).

A Mn(2+)-binding site is contributed by Asn172. Prenylated FMN is bound by residues 175–177 (IYR), 189–191 (RWL), and 194–195 (RG). Glu238 contacts Mn(2+). Asp287 functions as the Proton donor in the catalytic mechanism.

This sequence belongs to the UbiD family. As to quaternary structure, homohexamer. The cofactor is prenylated FMN. Mn(2+) serves as cofactor.

It is found in the cell membrane. The catalysed reaction is a 4-hydroxy-3-(all-trans-polyprenyl)benzoate + H(+) = a 2-(all-trans-polyprenyl)phenol + CO2. Its pathway is cofactor biosynthesis; ubiquinone biosynthesis. Functionally, catalyzes the decarboxylation of 3-octaprenyl-4-hydroxy benzoate to 2-octaprenylphenol, an intermediate step in ubiquinone biosynthesis. This Yersinia pseudotuberculosis serotype O:1b (strain IP 31758) protein is 3-octaprenyl-4-hydroxybenzoate carboxy-lyase.